Reading from the N-terminus, the 301-residue chain is Bifunctional protein FolD (301 aa).

NADP(+)-binding positions include 164–166, Ser191, and Ile232; that span reads GRS.

The protein belongs to the tetrahydrofolate dehydrogenase/cyclohydrolase family. Homodimer.

The enzyme catalyses (6R)-5,10-methylene-5,6,7,8-tetrahydrofolate + NADP(+) = (6R)-5,10-methenyltetrahydrofolate + NADPH. It carries out the reaction (6R)-5,10-methenyltetrahydrofolate + H2O = (6R)-10-formyltetrahydrofolate + H(+). It functions in the pathway one-carbon metabolism; tetrahydrofolate interconversion. Catalyzes the oxidation of 5,10-methylenetetrahydrofolate to 5,10-methenyltetrahydrofolate and then the hydrolysis of 5,10-methenyltetrahydrofolate to 10-formyltetrahydrofolate. The sequence is that of Bifunctional protein FolD from Borreliella afzelii (strain PKo) (Borrelia afzelii).